The following is a 425-amino-acid chain: UPF0761 membrane protein PXO_04555 (425 aa).

A run of 6 helical transmembrane segments spans residues 48 to 68 (VFALVPLAIVVFGVLSAFPAF), 105 to 125 (FTVAGMVALVASLLITLHSIE), 154 to 174 (GTMLAAASMAMAAYVFALPLF), 182 to 202 (LAEFAWRLAPMAVEFICIVLI), 219 to 239 (GALLAVILMEIVKWGFGVYLG), and 250 to 270 (ALSALPILLLWIYLSWVSVLL).

This sequence belongs to the UPF0761 family.

It localises to the cell inner membrane. The protein is UPF0761 membrane protein PXO_04555 of Xanthomonas oryzae pv. oryzae (strain PXO99A).